The sequence spans 198 residues: GTP-binding protein Di-Ras1 (198 aa).

Residues 17–22, 33–39, 61–65, 121–125, Ala151, and 151–152 each bind GTP; these read GVGKSS, RDTYIPT, DTTGS, NKCDE, and AK. Residues 36–44 carry the Effector region motif; sequence YIPTIEDTY. At Cys195 the chain carries Cysteine methyl ester. The S-geranylgeranyl cysteine moiety is linked to residue Cys195. The propeptide at 196 to 198 is removed in mature form; it reads ALM.

It belongs to the small GTPase superfamily. Di-Ras family.

Its subcellular location is the cell membrane. Its function is as follows. Displays low GTPase activity and exists predominantly in the GTP-bound form. This is GTP-binding protein Di-Ras1 (Diras1) from Mus musculus (Mouse).